The primary structure comprises 341 residues: Protein RecA, plasmid (341 aa).

80-87 is a binding site for ATP; that stretch reads GAESSGKT.

This sequence belongs to the RecA family.

Its subcellular location is the cytoplasm. Its function is as follows. Can catalyze the hydrolysis of ATP in the presence of single-stranded DNA, the ATP-dependent uptake of single-stranded DNA by duplex DNA, and the ATP-dependent hybridization of homologous single-stranded DNAs. It interacts with LexA causing its activation and leading to its autocatalytic cleavage. This is Protein RecA, plasmid from Lactococcus lactis subsp. lactis (Streptococcus lactis).